A 954-amino-acid polypeptide reads, in one-letter code: Serine/threonine-protein kinase ste20 (954 aa).

Over residues 1 to 17 (MDGQLSLLSPTSSSSTS) the composition is skewed to low complexity. Disordered stretches follow at residues 1 to 165 (MDGQ…YDPL) and 203 to 316 (AAPA…RKKS). The segment covering 18-28 (HSRKRLTKKQR) has biased composition (basic residues). 3 stretches are compositionally biased toward polar residues: residues 33–42 (NHRTSSSFNV), 57–75 (SASS…SLAR), and 100–121 (RSHT…TIPT). Low complexity-rich tracts occupy residues 127–136 (SPASSSQPQT), 143–153 (SAVASTTVTSS), and 203–214 (AAPAPTSTTTIA). Positions 224–234 (VAPPPPPPPPA) are enriched in pro residues. Composition is skewed to low complexity over residues 245 to 256 (ARSSKPSKSPKS) and 265 to 277 (ASSF…FSSA). Residues 334–347 (ISAPENPVHVTHVG) enclose the CRIB domain. Disordered stretches follow at residues 440–562 (PMIS…VQAS) and 587–655 (QAMA…SNAI). Composition is skewed to pro residues over residues 463-475 (RAPP…PGPL) and 514-527 (MPPP…PYLP). The region spanning 674–925 (YRGFTKIGQG…AHDLLRHDFM (252 aa)) is the Protein kinase domain. ATP contacts are provided by residues 680 to 688 (IGQGASGGV) and lysine 703. The active-site Proton acceptor is the aspartate 793.

Belongs to the protein kinase superfamily. STE Ser/Thr protein kinase family. STE20 subfamily.

It is found in the cytoplasm. The protein localises to the nucleus. It carries out the reaction L-seryl-[protein] + ATP = O-phospho-L-seryl-[protein] + ADP + H(+). The enzyme catalyses L-threonyl-[protein] + ATP = O-phospho-L-threonyl-[protein] + ADP + H(+). Its function is as follows. MAP4K component of the MAPK pathway required for the mating pheromone response and the regulation of cell polarity and cell cycle. Phosphorylates histone H2B to form H2BS10ph. The polypeptide is Serine/threonine-protein kinase ste20 (stk-4) (Neurospora crassa (strain ATCC 24698 / 74-OR23-1A / CBS 708.71 / DSM 1257 / FGSC 987)).